Here is a 338-residue protein sequence, read N- to C-terminus: Dihydroorotate dehydrogenase (quinone) (338 aa).

Residues 59-63 (AGLDK) and Thr83 contribute to the FMN site. Lys63 is a substrate binding site. A substrate-binding site is contributed by 108–112 (NRMGF). Asn136 and Asn169 together coordinate FMN. A substrate-binding site is contributed by Asn169. The Nucleophile role is filled by Ser172. A substrate-binding site is contributed by Asn174. Residues Lys214 and Thr242 each contribute to the FMN site. Substrate is bound at residue 243 to 244 (NT). Residues Gly265, Gly294, and 315–316 (YS) contribute to the FMN site.

The protein belongs to the dihydroorotate dehydrogenase family. Type 2 subfamily. Monomer. FMN serves as cofactor.

The protein localises to the cell membrane. It carries out the reaction (S)-dihydroorotate + a quinone = orotate + a quinol. It participates in pyrimidine metabolism; UMP biosynthesis via de novo pathway; orotate from (S)-dihydroorotate (quinone route): step 1/1. Catalyzes the conversion of dihydroorotate to orotate with quinone as electron acceptor. This Azoarcus sp. (strain BH72) protein is Dihydroorotate dehydrogenase (quinone).